The chain runs to 206 residues: Cytochrome c biogenesis ATP-binding export protein CcmA (206 aa).

The region spanning 2–206 (LEARDVVCIR…IQLTPSEGTP (205 aa)) is the ABC transporter domain. 34–41 (GANGVGKT) serves as a coordination point for ATP.

The protein belongs to the ABC transporter superfamily. CcmA exporter (TC 3.A.1.107) family. As to quaternary structure, the complex is composed of two ATP-binding proteins (CcmA) and two transmembrane proteins (CcmB).

It localises to the cell inner membrane. It carries out the reaction heme b(in) + ATP + H2O = heme b(out) + ADP + phosphate + H(+). In terms of biological role, part of the ABC transporter complex CcmAB involved in the biogenesis of c-type cytochromes; once thought to export heme, this seems not to be the case, but its exact role is uncertain. Responsible for energy coupling to the transport system. This chain is Cytochrome c biogenesis ATP-binding export protein CcmA, found in Pectobacterium atrosepticum (strain SCRI 1043 / ATCC BAA-672) (Erwinia carotovora subsp. atroseptica).